The sequence spans 285 residues: 2-dehydro-3-deoxyphosphooctonate aldolase (285 aa).

Belongs to the KdsA family.

Its subcellular location is the cytoplasm. The catalysed reaction is D-arabinose 5-phosphate + phosphoenolpyruvate + H2O = 3-deoxy-alpha-D-manno-2-octulosonate-8-phosphate + phosphate. It participates in carbohydrate biosynthesis; 3-deoxy-D-manno-octulosonate biosynthesis; 3-deoxy-D-manno-octulosonate from D-ribulose 5-phosphate: step 2/3. Its pathway is bacterial outer membrane biogenesis; lipopolysaccharide biosynthesis. The protein is 2-dehydro-3-deoxyphosphooctonate aldolase of Paracidovorax citrulli (strain AAC00-1) (Acidovorax citrulli).